The chain runs to 515 residues: Maturase K (515 aa).

Belongs to the intron maturase 2 family. MatK subfamily.

It localises to the plastid. The protein resides in the chloroplast. Usually encoded in the trnK tRNA gene intron. Probably assists in splicing its own and other chloroplast group II introns. The sequence is that of Maturase K from Pseudotsuga menziesii (Douglas-fir).